A 234-amino-acid chain; its full sequence is Cytochrome b (234 aa).

A run of 4 helical transmembrane segments spans residues 33–53 (FGSLLGLCLMIQILTGLFLAM), 77–98 (WLIRYLHANGASMFFICLYMHV), 113–133 (WNIGIILLFAVMATAFMGYVL), and 178–198 (FFAFHFILPFIIAALVMIHLL). His-83 and His-97 together coordinate heme b. Heme b contacts are provided by His-182 and His-196. His-201 provides a ligand contact to a ubiquinone. Residues 226–234 (IKDLLGFLV) traverse the membrane as a helical segment.

The protein belongs to the cytochrome b family. The cytochrome bc1 complex contains 11 subunits: 3 respiratory subunits (MT-CYB, CYC1 and UQCRFS1), 2 core proteins (UQCRC1 and UQCRC2) and 6 low-molecular weight proteins (UQCRH/QCR6, UQCRB/QCR7, UQCRQ/QCR8, UQCR10/QCR9, UQCR11/QCR10 and a cleavage product of UQCRFS1). This cytochrome bc1 complex then forms a dimer. The cofactor is heme b.

The protein resides in the mitochondrion inner membrane. Functionally, component of the ubiquinol-cytochrome c reductase complex (complex III or cytochrome b-c1 complex) that is part of the mitochondrial respiratory chain. The b-c1 complex mediates electron transfer from ubiquinol to cytochrome c. Contributes to the generation of a proton gradient across the mitochondrial membrane that is then used for ATP synthesis. In Lepus arcticus (Arctic hare), this protein is Cytochrome b (MT-CYB).